An 86-amino-acid chain; its full sequence is Omega-theraphotoxin-Hhn1f 1 (86 aa).

The signal sequence occupies residues 1 to 21 (MKSIVFVALFGLALLAVVCSA). Positions 22–50 (SEDAHKELLKEVVRAMVVDKTDAVQAEER) are excised as a propeptide. 3 disulfides stabilise this stretch: cysteine 52–cysteine 66, cysteine 59–cysteine 71, and cysteine 65–cysteine 78.

Belongs to the neurotoxin 10 (Hwtx-1) family. 17 (Hntx-9) subfamily. As to expression, expressed by the venom gland.

The protein localises to the secreted. Ion channel inhibitor. The polypeptide is Omega-theraphotoxin-Hhn1f 1 (Cyriopagopus hainanus (Chinese bird spider)).